The following is a 1418-amino-acid chain: Sterol 3-beta-glucosyltransferase (1418 aa).

Basic and acidic residues predominate over residues methionine 1–leucine 16. Disordered stretches follow at residues methionine 1–glycine 59, alanine 83–threonine 188, and leucine 207–serine 233. A compositionally biased stretch (polar residues) spans alanine 18 to leucine 28. Composition is skewed to basic and acidic residues over residues aspartate 35–glutamine 44 and serine 95–valine 105. The span at arginine 106–threonine 115 shows a compositional bias: polar residues. A compositionally biased stretch (low complexity) spans serine 116–serine 126. 2 stretches are compositionally biased toward basic and acidic residues: residues serine 127–threonine 139 and threonine 147–glutamine 166. Polar residues predominate over residues alanine 209–leucine 219. The 40-residue stretch at glutamate 249 to valine 288 folds into the GRAM 1 domain. The PH domain maps to alanine 289–phenylalanine 387. The segment at isoleucine 462 to proline 651 is disordered. The segment covering arginine 486–leucine 497 has biased composition (polar residues). Low complexity predominate over residues alanine 508–histidine 519. Positions serine 534 to threonine 575 are enriched in polar residues. The segment covering glycine 578–alanine 598 has biased composition (basic and acidic residues). Positions arginine 599–glutamine 612 are enriched in polar residues. Over residues glutamate 615–threonine 633 the composition is skewed to basic and acidic residues. Polar residues predominate over residues glutamate 635–proline 651. One can recognise a GRAM 2 domain in the interval aspartate 733–lysine 799. Residues serine 920, arginine 921, aspartate 923, alanine 1223, histidine 1225, histidine 1238, glycine 1242, threonine 1243, aspartate 1262, and glutamine 1263 each coordinate UDP-alpha-D-glucose. The segment at serine 1339 to arginine 1418 is disordered. Low complexity predominate over residues alanine 1341 to threonine 1355. Over residues glutamine 1358–methionine 1379 the composition is skewed to acidic residues. Positions glutamate 1380–serine 1391 are enriched in basic and acidic residues.

It belongs to the glycosyltransferase 28 family.

The protein localises to the cytoplasm. The protein resides in the preautophagosomal structure membrane. It catalyses the reaction a sterol + UDP-alpha-D-glucose = a sterol 3-beta-D-glucoside + UDP + H(+). It carries out the reaction ergosterol + UDP-alpha-D-glucose = ergosteryl 3-beta-D-glucoside + UDP + H(+). In terms of biological role, sterol glycosyltransferase responsible for the glycosylation of ergosterol to form ergosterol-glucoside. This Neosartorya fischeri (strain ATCC 1020 / DSM 3700 / CBS 544.65 / FGSC A1164 / JCM 1740 / NRRL 181 / WB 181) (Aspergillus fischerianus) protein is Sterol 3-beta-glucosyltransferase.